A 100-amino-acid polypeptide reads, in one-letter code: Pancreatic trypsin inhibitor (100 aa).

The N-terminal stretch at 1–21 (MKMSRLCLSVALLVLLGTLAA) is a signal peptide. The propeptide occupies 22–35 (STPGCDTSNQAKAQ). Residues 40-90 (CLEPPYTGPCKARIIRYFYNAKAGLCQTFVYGGCRAKRNNFKSAEDCMRTC) form the BPTI/Kunitz inhibitor domain. 3 disulfides stabilise this stretch: Cys-40/Cys-90, Cys-49/Cys-73, and Cys-65/Cys-86. Residues 94–100 (IGPWENL) constitute a propeptide that is removed on maturation.

The protein localises to the secreted. Inhibits trypsin, kallikrein, chymotrypsin, and plasmin. The polypeptide is Pancreatic trypsin inhibitor (Bos taurus (Bovine)).